The following is a 413-amino-acid chain: Multifunctional CCA protein (413 aa).

Residues G8 and R11 each coordinate ATP. Residues G8 and R11 each coordinate CTP. Mg(2+) is bound by residues D21 and D23. R91, R137, and R140 together coordinate ATP. CTP contacts are provided by R91, R137, and R140. In terms of domain architecture, HD spans 225–326; it reads TGVHVMMVID…ANLLQGVDAY (102 aa).

It belongs to the tRNA nucleotidyltransferase/poly(A) polymerase family. Bacterial CCA-adding enzyme type 1 subfamily. Monomer. Can also form homodimers and oligomers. Requires Mg(2+) as cofactor. Ni(2+) serves as cofactor.

The enzyme catalyses a tRNA precursor + 2 CTP + ATP = a tRNA with a 3' CCA end + 3 diphosphate. It carries out the reaction a tRNA with a 3' CCA end + 2 CTP + ATP = a tRNA with a 3' CCACCA end + 3 diphosphate. In terms of biological role, catalyzes the addition and repair of the essential 3'-terminal CCA sequence in tRNAs without using a nucleic acid template. Adds these three nucleotides in the order of C, C, and A to the tRNA nucleotide-73, using CTP and ATP as substrates and producing inorganic pyrophosphate. tRNA 3'-terminal CCA addition is required both for tRNA processing and repair. Also involved in tRNA surveillance by mediating tandem CCA addition to generate a CCACCA at the 3' terminus of unstable tRNAs. While stable tRNAs receive only 3'-terminal CCA, unstable tRNAs are marked with CCACCA and rapidly degraded. The polypeptide is Multifunctional CCA protein (Nitrosospira multiformis (strain ATCC 25196 / NCIMB 11849 / C 71)).